Consider the following 3005-residue polypeptide: Highly reducing polyketide synthase AFT9-1 (3005 aa).

In terms of domain architecture, Ketosynthase family 3 (KS3) spans 1–337 (MDPQQRLLLE…GTNAHAILER (337 aa)). Residues cysteine 87, histidine 222, and histidine 260 each act as for beta-ketoacyl synthase activity in the active site. Residues 437-751 (VFTGQGAQWP…SYMSALVRGS (315 aa)) form a malonyl-CoA:ACP transacylase (MAT) domain region. The interval 821–936 (HDLLGLKMTD…GSVEVKYAAA (116 aa)) is N-terminal hotdog fold. The interval 821-1114 (HDLLGLKMTD…SGLELRRLAP (294 aa)) is dehydratase (DH) domain. Residues 821-1118 (HDLLGLKMTD…LRRLAPTGQP (298 aa)) enclose the PKS/mFAS DH domain. Histidine 853 acts as the Proton acceptor; for dehydratase activity in catalysis. A C-terminal hotdog fold region spans residues 963 to 1118 (IEKISSQELY…LRRLAPTGQP (156 aa)). Residue aspartate 1028 is the Proton donor; for dehydratase activity of the active site. The segment at 1259–1445 (ADDSSKRCYD…MRKASLNMQL (187 aa)) is methyltransferase (CMet) domain. The segment at 1683 to 1985 (EFMKMPVFTE…QHHRNESTVL (303 aa)) is enoyl reductase (ER) (ER) domain. Residues 2008–2191 (ATYVVSGGRG…YMSLNVGTIE (184 aa)) form a ketoreductase (KR) domain region. Residues 2293 to 2375 (TRDFEKISQL…SLGAKVASRS (83 aa)) form the Carrier domain. Serine 2335 carries the post-translational modification O-(pantetheine 4'-phosphoryl)serine.

Its pathway is mycotoxin biosynthesis. Highly reducing polyketide synthase; part of the gene clusters that mediate the biosynthesis of the host-selective toxins (HSTs) AF-toxins responsible for Alternaria black spot of strawberry disease by the strawberry pathotype. AF-toxin I and III are valine derivatives of 2,3-dyhydroxy-isovaleric acid and 2-hydroxy-isovaleric acid respectively, while AF II is an isoleucine derivative of 2-hydroxy-valeric acid. These derivatives are bound to a 9,10-epoxy-8-hydroxy-9-methyl-decatrienoic acid (EDA) moiety. On cellular level, AF-toxins affect plasma membrane of susceptible cells and cause a sudden increase in loss of K(+) after a few minutes of toxin treatment. The aldo-keto reductase AFTS1 catalyzes the conversion of 2-keto-isovaleric acid (2-KIV) to 2-hydroxy-isovaleric acid (2-HIV) by reduction of its ketone to an alcohol. The acyl-CoA ligase AFT1, the hydrolase AFT2 and the enoyl-CoA hydratases AFT3 and AFT6, but also the polyketide synthase AFT9, the acyl-CoA dehydrogenase AFT10, the cytochrome P450 monooxygenase AFT11 and the oxidoreductase AFT12 are all involved in the biosynthesis of the AK-, AF- and ACT-toxin common EDA structural moiety. The exact function of each enzyme, and of additional enzymes identified within the AF-toxin clusters have still to be determined. The chain is Highly reducing polyketide synthase AFT9-1 from Alternaria alternata (Alternaria rot fungus).